A 284-amino-acid chain; its full sequence is 4-diphosphocytidyl-2-C-methyl-D-erythritol kinase (284 aa).

Lys-14 is an active-site residue. Residue 98–108 participates in ATP binding; sequence PMGGGLGGGSS. The active site involves Asp-140.

The protein belongs to the GHMP kinase family. IspE subfamily.

It catalyses the reaction 4-CDP-2-C-methyl-D-erythritol + ATP = 4-CDP-2-C-methyl-D-erythritol 2-phosphate + ADP + H(+). It participates in isoprenoid biosynthesis; isopentenyl diphosphate biosynthesis via DXP pathway; isopentenyl diphosphate from 1-deoxy-D-xylulose 5-phosphate: step 3/6. Catalyzes the phosphorylation of the position 2 hydroxy group of 4-diphosphocytidyl-2C-methyl-D-erythritol. This Shewanella sp. (strain ANA-3) protein is 4-diphosphocytidyl-2-C-methyl-D-erythritol kinase.